Reading from the N-terminus, the 337-residue chain is DNA repair and recombination protein RadA (337 aa).

Position 115 to 122 (115 to 122 (GEFGSGKT)) interacts with ATP.

This sequence belongs to the eukaryotic RecA-like protein family.

In terms of biological role, involved in DNA repair and in homologous recombination. Binds and assemble on single-stranded DNA to form a nucleoprotein filament. Hydrolyzes ATP in a ssDNA-dependent manner and promotes DNA strand exchange between homologous DNA molecules. The sequence is that of DNA repair and recombination protein RadA (radA) from Archaeoglobus fulgidus (strain ATCC 49558 / DSM 4304 / JCM 9628 / NBRC 100126 / VC-16).